The chain runs to 290 residues: MPTLQTLRRKVKTIQNITHIVHSMETLSMVKIRALQDRSLRLKPYTEELNNILMELVKRLSNEYLNHPLVKERVVYKTGVLVFTSDLGFCGSYNLQIIETLKKFIGNKKSQNLVFYSVGSYAQRYLSSNNFNIRKKYIKFLEDTSFSNAKLLARDLLDDFLNYYIDELFVIYFDFINIAKQEVRIKKLLPLIPISLEEKKEEFFLFLPSLSEILDPLLMDIFETQIHQIMLDSAASEQAFRRFAMKRAHENAQKIYSKLLFQLNQLRQNQITRELLDITSSIEAMKEEVK.

This sequence belongs to the ATPase gamma chain family. F-type ATPases have 2 components, CF(1) - the catalytic core - and CF(0) - the membrane proton channel. CF(1) has five subunits: alpha(3), beta(3), gamma(1), delta(1), epsilon(1). CF(0) has three main subunits: a, b and c.

It is found in the cell inner membrane. Produces ATP from ADP in the presence of a proton gradient across the membrane. The gamma chain is believed to be important in regulating ATPase activity and the flow of protons through the CF(0) complex. This is ATP synthase gamma chain from Dictyoglomus thermophilum (strain ATCC 35947 / DSM 3960 / H-6-12).